A 662-amino-acid chain; its full sequence is uncharacterized protein (662 aa).

5 residues coordinate FAD: Ser145, Glu164, Trp173, Asp184, and Tyr190. Positions Ser638–Ser662 are disordered.

It belongs to the FAD-binding monooxygenase family. FAD serves as cofactor.

This is an uncharacterized protein from Sinorhizobium fredii (strain NBRC 101917 / NGR234).